The following is a 384-amino-acid chain: S-adenosylmethionine synthase (384 aa).

H15 serves as a coordination point for ATP. Residue D17 participates in Mg(2+) binding. E43 serves as a coordination point for K(+). L-methionine-binding residues include E56 and Q99. The segment at 99–109 (QSPDINQGVDR) is flexible loop. Residues 164–166 (DAK), 230–231 (RF), D239, 245–246 (RK), A262, and K266 each bind ATP. D239 serves as a coordination point for L-methionine. K270 contributes to the L-methionine binding site.

The protein belongs to the AdoMet synthase family. In terms of assembly, homotetramer; dimer of dimers. It depends on Mg(2+) as a cofactor. The cofactor is K(+).

It is found in the cytoplasm. The enzyme catalyses L-methionine + ATP + H2O = S-adenosyl-L-methionine + phosphate + diphosphate. It participates in amino-acid biosynthesis; S-adenosyl-L-methionine biosynthesis; S-adenosyl-L-methionine from L-methionine: step 1/1. Its function is as follows. Catalyzes the formation of S-adenosylmethionine (AdoMet) from methionine and ATP. The overall synthetic reaction is composed of two sequential steps, AdoMet formation and the subsequent tripolyphosphate hydrolysis which occurs prior to release of AdoMet from the enzyme. The protein is S-adenosylmethionine synthase of Salmonella gallinarum (strain 287/91 / NCTC 13346).